The sequence spans 247 residues: MWCSLALILILVTVSGIMCNRTDFCVGSPGIPGTPGSHGLPGRDGRDGVKGDPGPPGPMGPPGVMPGFPGCNGMNGIPGAPGERGDKGDPGERGPPGLPASLDEEIQTIFHNLKHKILQLTGVLSLQGSMLAVGDKVFATNGQSVDFNAIKETCARAGGDVAAPRNSEENTAISSIVKKYNIYSYLGLTEGHTPGDFHYLDGSPLNYTNWYPGEPRGRGKEKCAEMYLDGTWNDKNCLQSRLTICEF.

A signal peptide spans 1 to 19 (MWCSLALILILVTVSGIMC). An N-linked (GlcNAc...) asparagine glycan is attached at Asn20. A Collagen-like domain is found at 27-99 (GSPGIPGTPG…PGERGPPGLP (73 aa)). A 4-hydroxyproline mark is found at Pro29, Pro32, Pro35, Pro41, Pro53, Pro56, Pro62, Pro66, and Pro69. The disordered stretch occupies residues 32–101 (PGTPGSHGLP…ERGPPGLPAS (70 aa)). Positions 41–50 (PGRDGRDGVK) are enriched in basic and acidic residues. Pro residues predominate over residues 53–64 (PGPPGPMGPPGV). The span at 83–92 (ERGDKGDPGE) shows a compositional bias: basic and acidic residues. Residues 131 to 247 (LAVGDKVFAT…LQSRLTICEF (117 aa)) form the C-type lectin domain. Cystine bridges form between Cys154-Cys245 and Cys223-Cys237. An N-linked (GlcNAc...) asparagine glycan is attached at Asn206. Ca(2+) is bound by residues Glu214, Arg216, Asn233, and Asp234.

Belongs to the SFTPA family. Oligomeric complex of 6 set of homotrimers.

It localises to the secreted. Its subcellular location is the extracellular space. The protein resides in the extracellular matrix. It is found in the surface film. In terms of biological role, in presence of calcium ions, it binds to surfactant phospholipids and contributes to lower the surface tension at the air-liquid interface in the alveoli of the mammalian lung and is essential for normal respiration. Enhances the expression of MYO18A/SP-R210 on alveolar macrophages. This chain is Pulmonary surfactant-associated protein A (SFTPA1), found in Cavia porcellus (Guinea pig).